The sequence spans 368 residues: C-glycoside deglycosidase alpha subunit (368 aa).

An a divalent metal cation-binding site is contributed by Glu145. The active-site Proton acceptor is the His147. Residues Asp177, His275, and Glu311 each coordinate a divalent metal cation.

The protein belongs to the C-glycoside deglycosidase alpha subunit family. In terms of assembly, heterodimer composed of an alpha subunit (CarB) and a beta subunit (CarC). The cofactor is a divalent metal cation.

The enzyme catalyses 3''-dehydroisovitexin = 1,5-anhydro-D-erythro-hex-1-en-3-ulose + apigenin. It carries out the reaction 3''-dehydroisoorientin = 1,5-anhydro-D-erythro-hex-1-en-3-ulose + luteolin. Carbon-carbon bond-cleaving enzyme which participates in the metabolism of C-glycosides. Acts on the C6-glycosylated compounds 3''-dehydroisovitexin (3''-oxo-isovitexin) and 3''-dehydroisoorientin (3''-oxo-homoorientin). Shows weak activity with 3'-dehydromangiferin (3'-oxo-mangiferin). This Microbacterium trichothecenolyticum (Aureobacterium trichothecenolyticum) protein is C-glycoside deglycosidase alpha subunit.